The chain runs to 888 residues: Potassium channel AKT6 (888 aa).

At 1–84 the chain is on the cytoplasmic side; the sequence is MEKKKVWFWG…PFDPRYRAWE (84 aa). Residues 10–31 form a disordered region; it reads GVKDDGEGGGGRGGGRTKDAED. Residues 85-105 form a helical membrane-spanning segment; the sequence is TFLVFLVLYTAWASPFEFGFL. Topologically, residues 106–113 are extracellular; that stretch reads QKPRPPLS. A helical transmembrane segment spans residues 114 to 134; sequence ILDNIVNGFFAVDIVLTFFVA. Over 135–155 the chain is Cytoplasmic; that stretch reads FLDKVTYLLVDDPKRIAWRYA. A helical transmembrane segment spans residues 156-176; the sequence is STWLIFDVVSTFPYEIFGSLL. The Extracellular portion of the chain corresponds to 177 to 184; it reads HESIQGYG. Residues 185-205 traverse the membrane as a helical; Voltage-sensor segment; it reads IFSMLRLWRLRRVSNCFARLE. Topologically, residues 206–219 are cytoplasmic; that stretch reads KDRKYSYFWVRCSK. The helical transmembrane segment at 220-240 threads the bilayer; that stretch reads LLLVTLFVIHCGACFLYSIAA. The Extracellular segment spans residues 241-267; sequence HYPDPSKTFMALTDENWKESPIAVRYN. Residues 268–287 constitute an intramembrane region (pore-forming); that stretch reads TAMYWSITTFSTTGYGDIHG. Residues 288-291 lie on the Extracellular side of the membrane; the sequence is VNSR. A helical transmembrane segment spans residues 292–312; the sequence is EMTFILFYMVFNLGLSAYIIG. Topologically, residues 313 to 888 are cytoplasmic; sequence NMTNLVVHVT…GDFLLLSRDP (576 aa). 398–519 contributes to the a nucleoside 3',5'-cyclic phosphate binding site; it reads LFHGISNDLL…IMNNLLQHLK (122 aa). ANK repeat units follow at residues 543-572, 576-605, 609-638, 640-669, and 673-702; these read DLPL…SPNE, DGRT…DPNI, EGNV…KLSL, SVSY…DVTL, and NGTT…DLDW. A KHA domain is found at 822–888; that stretch reads RVTISSPENG…GDFLLLSRDP (67 aa).

The protein belongs to the potassium channel family. Plant (TC 1.A.1.4) subfamily. In terms of assembly, the potassium channel is probably composed of a homo- or heterotetrameric complex of pore-forming subunits. As to expression, predominantly expressed in flowers; especially in pollen.

The protein resides in the membrane. In terms of biological role, highly selective inward-rectifying potassium channel that could mediate potassium uptake in the pollen membrane. Plays an important role in pollen tube development. Assuming opened or closed conformations in response to the voltage difference across the membrane, the channel is activated by hyperpolarization. May interact with the cytoskeleton or with regulatory proteins. The chain is Potassium channel AKT6 (AKT6) from Arabidopsis thaliana (Mouse-ear cress).